Here is a 428-residue protein sequence, read N- to C-terminus: Beta-1,3-galactosyl-O-glycosyl-glycoprotein beta-1,6-N-acetylglucosaminyltransferase 4 (428 aa).

The Cytoplasmic portion of the chain corresponds to 1–12; it reads MRRCAVLHRLRC. Residues 13–30 form a helical; Signal-anchor for type II membrane protein membrane-spanning segment; that stretch reads KFYVFVVSLFVVVKLVYL. The Lumenal segment spans residues 31 to 428; that stretch reads KISMDNSIYI…QLQQCLRRVS (398 aa). N-linked (GlcNAc...) asparagine glycosylation occurs at asparagine 59. Disulfide bonds link cysteine 60-cysteine 214, cysteine 148-cysteine 369, cysteine 169-cysteine 196, and cysteine 378-cysteine 410.

Belongs to the glycosyltransferase 14 family.

The protein resides in the golgi apparatus membrane. The catalysed reaction is a 3-O-[beta-D-galactosyl-(1-&gt;3)-N-acetyl-alpha-D-galactosaminyl]-L-seryl-[protein] + UDP-N-acetyl-alpha-D-glucosamine = 3-O-{beta-D-galactosyl-(1-&gt;3)-[N-acetyl-beta-D-glucosaminyl-(1-&gt;6)]-N-acetyl-alpha-D-galactosaminyl}-L-seryl-[protein] + UDP + H(+). The enzyme catalyses a 3-O-[beta-D-galactosyl-(1-&gt;3)-N-acetyl-alpha-D-galactosaminyl]-L-threonyl-[protein] + UDP-N-acetyl-alpha-D-glucosamine = a 3-O-{beta-D-galactosyl-(1-&gt;3)-[N-acetyl-beta-D-glucosaminyl-(1-&gt;6)]-N-acetyl-alpha-D-galactosaminyl}-L-threonyl-[protein] + UDP + H(+). It participates in protein modification; protein glycosylation. Functionally, glycosyltransferase that mediates core 2 O-glycan branching, an important step in mucin-type biosynthesis. This chain is Beta-1,3-galactosyl-O-glycosyl-glycoprotein beta-1,6-N-acetylglucosaminyltransferase 4 (gcnt4), found in Danio rerio (Zebrafish).